The chain runs to 241 residues: GLIPR1-like protein 1 (241 aa).

Residues 1–22 (MILRKKLSYLWTLGLCLVASKS) form the signal peptide. In terms of domain architecture, SCP spans 39-172 (LRLHNEARTN…PDSALLVCNY (134 aa)). Ser220 carries GPI-anchor amidated serine lipidation. The propeptide at 221 to 241 (GTRQLIACNPLYLISVLLTIF) is removed in mature form.

This sequence belongs to the CRISP family. As to quaternary structure, part of a oolemmal binding multimeric complex (IZUMO1 complex) composed at least of IZUMO1 and GLIPR1L1; the complex assemblage is influenced by the maturation status of the male germ cell. Interacts with IZUMO1. Post-translationally, N-glycosylated. N-glycosylation decreases during the transit in the caput. As to expression, highly expressed in testis, where it localizes to round and elongating spermatids and differentiated spermatozoa in the seminiferous tubules and epididymis (at protein level).

The protein localises to the cytoplasmic vesicle. Its subcellular location is the secretory vesicle. The protein resides in the acrosome. It is found in the cell membrane. It localises to the membrane raft. Required for optimal fertilization at the stage of sperm-oocyte fusion, plays a role in optimizing acrosome function, the translocation of IZUMO1 during the acrosome reaction and the fertilization process. Component of epididymosomes, one type of membranous microvesicules which mediate the transfer of lipids and proteins to spermatozoa plasma membrane during epididymal maturation. Also a component of the CD9-positive microvesicules found in the cauda region. The sequence is that of GLIPR1-like protein 1 from Bos taurus (Bovine).